A 90-amino-acid chain; its full sequence is Probable Fe(2+)-trafficking protein (90 aa).

The protein belongs to the Fe(2+)-trafficking protein family.

Its function is as follows. Could be a mediator in iron transactions between iron acquisition and iron-requiring processes, such as synthesis and/or repair of Fe-S clusters in biosynthetic enzymes. This is Probable Fe(2+)-trafficking protein from Nitrosomonas europaea (strain ATCC 19718 / CIP 103999 / KCTC 2705 / NBRC 14298).